The following is a 431-amino-acid chain: Ribosomal RNA small subunit methyltransferase B (431 aa).

S-adenosyl-L-methionine-binding positions include 254-260 (CAAPGGK), D277, D303, and D322. C375 acts as the Nucleophile in catalysis.

This sequence belongs to the class I-like SAM-binding methyltransferase superfamily. RsmB/NOP family.

Its subcellular location is the cytoplasm. The enzyme catalyses cytidine(967) in 16S rRNA + S-adenosyl-L-methionine = 5-methylcytidine(967) in 16S rRNA + S-adenosyl-L-homocysteine + H(+). In terms of biological role, specifically methylates the cytosine at position 967 (m5C967) of 16S rRNA. This Klebsiella pneumoniae subsp. pneumoniae (strain ATCC 700721 / MGH 78578) protein is Ribosomal RNA small subunit methyltransferase B.